Consider the following 75-residue polypeptide: Small ribosomal subunit protein bS18 (75 aa).

It belongs to the bacterial ribosomal protein bS18 family. Part of the 30S ribosomal subunit. Forms a tight heterodimer with protein bS6.

Binds as a heterodimer with protein bS6 to the central domain of the 16S rRNA, where it helps stabilize the platform of the 30S subunit. The protein is Small ribosomal subunit protein bS18 of Mycoplasma capricolum subsp. capricolum (strain California kid / ATCC 27343 / NCTC 10154).